A 324-amino-acid chain; its full sequence is Hairy/enhancer-of-split related with YRPW motif protein 2 (324 aa).

A disordered region spans residues 1-34 (MKRPCEDSTSDSDMDETIDVGSENNYSGQSNGSF). Acidic residues predominate over residues 8–18 (STSDSDMDETI). The segment covering 22–34 (SENNYSGQSNGSF) has biased composition (polar residues). Residues 48–103 (ARKKRRGIIEKRRRDRINNSLSELRRLVPTAFEKQGSAKLEKAEILQMTVDHLKML) enclose the bHLH domain. Residues 122–157 (LSIGFRECLTEVARYLSSVEGLDSSDPLRVRLVSHL) form the Orange domain. Residues 294-311 (SSSVSTSTTSQQSSGSSS) are compositionally biased toward low complexity. The segment at 294–324 (SSSVSTSTTSQQSSGSSSKPYRPWGTEVGAF) is disordered. The YRPW motif signature appears at 314 to 317 (YRPW).

The protein belongs to the HEY family.

It localises to the nucleus. In terms of biological role, transcriptional repressor. Downstream effector of Notch signaling which regulates cell fate choice in angioblasts. Represses the venous cell fate, thereby promoting the arterial cell fate and aorta formation. The polypeptide is Hairy/enhancer-of-split related with YRPW motif protein 2 (hey2) (Danio rerio (Zebrafish)).